The chain runs to 359 residues: Olfactory receptor 5T2 (359 aa).

Topologically, residues 1–64 (MSYSIYKSTV…GFTDNLELQT (64 aa)) are extracellular. Asparagine 44 is a glycosylation site (N-linked (GlcNAc...) asparagine). A helical membrane pass occupies residues 65-85 (IFFFLFLAIYLFTLMGNLGLI). Over 86–93 (LVVIRDSQ) the chain is Cytoplasmic. Residues 94–114 (LHKPMYYFLSMLSSVDACYSS) traverse the membrane as a helical segment. The Extracellular portion of the chain corresponds to 115 to 138 (VITPNMLVDFTTKNKVISFLGCVA). A helical transmembrane segment spans residues 139 to 159 (QVFLACSFGTTECFLLAAMAY). The Cytoplasmic portion of the chain corresponds to 160–178 (DRYVAIYNPLLYSVSMSPR). Residues 179 to 199 (VYMPLINASYVAGILHATIHT) form a helical membrane-spanning segment. Residues 200 to 235 (VATFSLSFCGANEIRRVFCDIPPLLAISYSDTHTNQ) are Extracellular-facing. The chain crosses the membrane as a helical span at residues 236–256 (LLLFYFVGSIELVTILIVLIS). Residues 257 to 276 (YGLILLAILKMYSAEGRRKV) lie on the Cytoplasmic side of the membrane. A helical membrane pass occupies residues 277–297 (FSTCGAHLTGVSIYYGTILFM). The Extracellular segment spans residues 298 to 310 (YVRPSSSYASDHD). Residues 311-331 (MIVSIFYTIVIPLLNPVIYSL) form a helical membrane-spanning segment. At 332 to 359 (RNKDVKDSMKKMFGKNQVINKVYFHTKK) the chain is on the cytoplasmic side.

It belongs to the G-protein coupled receptor 1 family.

The protein localises to the cell membrane. In terms of biological role, odorant receptor. This chain is Olfactory receptor 5T2 (OR5T2), found in Homo sapiens (Human).